We begin with the raw amino-acid sequence, 401 residues long: Exodeoxyribonuclease 7 large subunit (401 aa).

This sequence belongs to the XseA family. As to quaternary structure, heterooligomer composed of large and small subunits.

It is found in the cytoplasm. The catalysed reaction is Exonucleolytic cleavage in either 5'- to 3'- or 3'- to 5'-direction to yield nucleoside 5'-phosphates.. Functionally, bidirectionally degrades single-stranded DNA into large acid-insoluble oligonucleotides, which are then degraded further into small acid-soluble oligonucleotides. The sequence is that of Exodeoxyribonuclease 7 large subunit from Clostridium botulinum (strain Hall / ATCC 3502 / NCTC 13319 / Type A).